The primary structure comprises 410 residues: WD repeat and FYVE domain-containing protein 1 (410 aa).

WD repeat units follow at residues 22–61 (GHQD…QYWP), 66–105 (TMAS…NKMN), 112–150 (AHQN…NMLG), 153–192 (FFTS…CSVI), 197–236 (GHEG…GRTL), and 240–279 (GHHD…EEAP). An FYVE-type zinc finger spans residues 281 to 352 (WLESDSCQKC…VCDSCYDSIK (72 aa)). Positions 287, 290, 314, 317, 322, 325, 344, and 347 each coordinate Zn(2+). The WD 7 repeat unit spans residues 364–403 (EGKHNISHMSMDIARGLMVTCGTDRIVKIWDMTPVVGCSL). Ser408 carries the phosphoserine modification.

In terms of assembly, binds PtdIns3P in vitro with high specificity over other phosphoinositides. Interacts (via WD repeat 2) with tyrosine-phosphorylated TLR3 (via TIR domain) in response to poly(I:C). Interacts with TICAM1 in response to poly(I:C). Interacts with TLR4 in response to LPS.

It localises to the early endosome. In terms of biological role, positively regulates TLR3- and TLR4-mediated signaling pathways by bridging the interaction between TLR3 or TLR4 and TICAM1. Promotes TLR3/4 ligand-induced activation of transcription factors IRF3 and NF-kappa-B, as well as the production of IFN-beta and inflammatory cytokines. The chain is WD repeat and FYVE domain-containing protein 1 (WDFY1) from Homo sapiens (Human).